Reading from the N-terminus, the 104-residue chain is UPF0213 protein in VLF1-GP41 intergenic region (104 aa).

In terms of domain architecture, GIY-YIG spans 9-89 (KVWCVYILRQ…SKYFKLRLIK (81 aa)).

The protein belongs to the UPF0213 family.

In Autographa californica nuclear polyhedrosis virus (AcMNPV), this protein is UPF0213 protein in VLF1-GP41 intergenic region.